A 569-amino-acid polypeptide reads, in one-letter code: Ribosome-inactivating protein SNAI' (569 aa).

An N-terminal signal peptide occupies residues Met-1–Ser-28. Asn-40 carries an N-linked (GlcNAc...) asparagine glycan. The active site involves Glu-201. 3 cysteine pairs are disulfide-bonded: Cys-286-Cys-311, Cys-328-Cys-347, and Cys-369-Cys-381. Ricin B-type lectin domains lie at Glu-315–Gly-435 and Val-437–Ser-565. Residues Asp-325 to Ser-365 form a 1-alpha repeat. The stretch at Leu-366–Asn-401 is one 1-beta repeat. One copy of the 1-gamma repeat lies at Ser-404–Asn-436. Residues Glu-448–Val-488 form a 2-alpha repeat. Cystine bridges form between Cys-451-Cys-466 and Cys-495-Cys-512. The stretch at Arg-492–Asn-530 is one 2-beta repeat. Residues Ser-533 to Thr-566 form a 2-gamma repeat.

In the N-terminal section; belongs to the ribosome-inactivating protein family. Type 2 RIP subfamily. In terms of assembly, disulfide-linked dimer of A and B chains.

It carries out the reaction Endohydrolysis of the N-glycosidic bond at one specific adenosine on the 28S rRNA.. Functionally, the A chain is responsible for inhibiting protein synthesis through the catalytic inactivation of 60S ribosomal subunits by removing adenine from position 4,324 of 28S rRNA. The B chain binds to cell receptors and probably facilitates the entry into the cell of the A chain; B chains are also responsible for cell agglutination (lectin activity). Agglutination is inhibited by Neu5Ac(alpha2,6)lactose, and N-linked glycoproteins such as fetuin and orosomucoid. The protein is Ribosome-inactivating protein SNAI' of Sambucus nigra (European elder).